The chain runs to 79 residues: Large ribosomal subunit protein bL28 (79 aa).

Residues 1–26 are disordered; the sequence is MAKVCQVTGKRPQSGNNVSHANKKTN. Polar residues predominate over residues 11 to 20; the sequence is RPQSGNNVSH.

It belongs to the bacterial ribosomal protein bL28 family.

This Coxiella burnetii (strain CbuK_Q154) (Coxiella burnetii (strain Q154)) protein is Large ribosomal subunit protein bL28.